The primary structure comprises 202 residues: Interleukin-17D (202 aa).

An N-terminal signal peptide occupies residues 1 to 15 (MLVAGFLLALPPSWA). The tract at residues 65 to 85 (QARNASCPAGGRPADRRFRPP) is disordered. N-linked (GlcNAc...) asparagine glycans are attached at residues asparagine 68 and asparagine 181.

Belongs to the IL-17 family. Expressed preferentially in adipose, skeletal muscle and CNS.

Its subcellular location is the secreted. Its function is as follows. Induces expression of IL6, CXCL8/IL8, and CSF2/GM-CSF from endothelial cells. The chain is Interleukin-17D (IL17D) from Homo sapiens (Human).